A 544-amino-acid chain; its full sequence is Pectinesterase 3 (544 aa).

N-linked (GlcNAc...) asparagine glycosylation is found at N174, N257, and N291. T306 and Q336 together coordinate substrate. D359 (proton donor) is an active-site residue. D380 (nucleophile) is an active-site residue. Positions 448 and 450 each coordinate substrate. N532 carries N-linked (GlcNAc...) asparagine glycosylation.

In the N-terminal section; belongs to the PMEI family. The protein in the C-terminal section; belongs to the pectinesterase family.

It is found in the secreted. Its subcellular location is the cell wall. The catalysed reaction is [(1-&gt;4)-alpha-D-galacturonosyl methyl ester](n) + n H2O = [(1-&gt;4)-alpha-D-galacturonosyl](n) + n methanol + n H(+). Its pathway is glycan metabolism; pectin degradation; 2-dehydro-3-deoxy-D-gluconate from pectin: step 1/5. Its function is as follows. Acts in the modification of cell walls via demethylesterification of cell wall pectin. The sequence is that of Pectinesterase 3 (PME3) from Solanum lycopersicum (Tomato).